A 430-amino-acid polypeptide reads, in one-letter code: GTPase Obg (430 aa).

One can recognise an Obg domain in the interval 1 to 158; sequence MFVDQVTISL…LDVTLELKLL (158 aa). A disordered region spans residues 118–145; sequence RGGRGGRGNSRFATPRNPAPDFSENGEP. The OBG-type G domain occupies 159–329; that stretch reads ADVGLVGFPS…LLYAIADKLD (171 aa). Residues 165-172, 190-194, 212-215, 282-285, and 310-312 contribute to the GTP site; these read GFPSVGKS, FTTIK, DLPG, NKMD, and STI. Mg(2+)-binding residues include Ser172 and Thr192. The OCT domain maps to 352 to 430; it reads KHTPSQDKFT…ILGGEFEFVE (79 aa).

The protein belongs to the TRAFAC class OBG-HflX-like GTPase superfamily. OBG GTPase family. As to quaternary structure, monomer. It depends on Mg(2+) as a cofactor.

Its subcellular location is the cytoplasm. An essential GTPase which binds GTP, GDP and possibly (p)ppGpp with moderate affinity, with high nucleotide exchange rates and a fairly low GTP hydrolysis rate. Plays a role in control of the cell cycle, stress response, ribosome biogenesis and in those bacteria that undergo differentiation, in morphogenesis control. The polypeptide is GTPase Obg (Staphylococcus haemolyticus (strain JCSC1435)).